We begin with the raw amino-acid sequence, 644 residues long: Probable lysophospholipase 2 (644 aa).

Positions M1–G19 are cleaved as a signal peptide. N44, N96, N141, N178, N221, N245, N253, N281, N286, N316, N319, N373, N393, N449, N501, N558, N579, and N596 each carry an N-linked (GlcNAc...) asparagine glycan. A PLA2c domain is found at S53–D600.

The protein belongs to the lysophospholipase family.

Its subcellular location is the secreted. It carries out the reaction a 1-acyl-sn-glycero-3-phosphocholine + H2O = sn-glycerol 3-phosphocholine + a fatty acid + H(+). Catalyzes the release of fatty acids from lysophospholipids. The protein is Probable lysophospholipase 2 (plb2) of Schizosaccharomyces pombe (strain 972 / ATCC 24843) (Fission yeast).